We begin with the raw amino-acid sequence, 76 residues long: Anaredoxin (76 aa).

Positions 24–66 (CMVCWEVNSKANGHHLIPYSEGGSADIQNMMTLCPSCHTKYHK) constitute an HNH domain.

It belongs to the HNH nuclease family.

Functionally, putative P-450 reductase. This Nostoc sp. (strain PCC 7120 / SAG 25.82 / UTEX 2576) protein is Anaredoxin.